The primary structure comprises 252 residues: MQAVDFNSDMGEGFGPWTIGDGVDNELMGYISSANIATGFHAGDPGTMRRTVERAKALGVAVGAHPGFRDLVGFGRRHINASAQELVDDMLYQLGALREIARAQGVRLQHIKPHGALYMHLARDEEAARLLVENLRVIEPELLLYCMPGSVICRIAQELGQPVIREFYADREYDLSGSIVFTRNVRGYEPQAVAERVLRACRQGVVRTVEGQDLAIEFDSICLHSDTPGALDLVEATRKALDAAGIVVRAPR.

Belongs to the LamB/PxpA family. In terms of assembly, forms a complex composed of PxpA, PxpB and PxpC.

The catalysed reaction is 5-oxo-L-proline + ATP + 2 H2O = L-glutamate + ADP + phosphate + H(+). Functionally, catalyzes the cleavage of 5-oxoproline to form L-glutamate coupled to the hydrolysis of ATP to ADP and inorganic phosphate. The polypeptide is 5-oxoprolinase subunit A 1 (Pseudomonas putida (strain ATCC 47054 / DSM 6125 / CFBP 8728 / NCIMB 11950 / KT2440)).